Reading from the N-terminus, the 131-residue chain is Large ribosomal subunit protein uL22 (131 aa).

Over residues 1-11 (MAKGHRSKIKR) the composition is skewed to basic residues. The tract at residues 1 to 20 (MAKGHRSKIKRERNEVRDTR) is disordered.

This sequence belongs to the universal ribosomal protein uL22 family. Part of the 50S ribosomal subunit.

Its function is as follows. This protein binds specifically to 23S rRNA; its binding is stimulated by other ribosomal proteins, e.g. L4, L17, and L20. It is important during the early stages of 50S assembly. It makes multiple contacts with different domains of the 23S rRNA in the assembled 50S subunit and ribosome. Functionally, the globular domain of the protein is located near the polypeptide exit tunnel on the outside of the subunit, while an extended beta-hairpin is found that lines the wall of the exit tunnel in the center of the 70S ribosome. This chain is Large ribosomal subunit protein uL22, found in Agathobacter rectalis (strain ATCC 33656 / DSM 3377 / JCM 17463 / KCTC 5835 / VPI 0990) (Eubacterium rectale).